The chain runs to 649 residues: Quinol oxidase subunit 1 (649 aa).

At 1-15 (MKFKWDEFFVTGDPL) the chain is on the extracellular side. Residues 16–34 (ILGAQVSIALSTIAIIFVL) traverse the membrane as a helical segment. The Cytoplasmic portion of the chain corresponds to 35 to 56 (TYFKKWKWLWSEWITTVDHKKL). Residues 57 to 75 (GIMYIISAVIMLFRGGVDG) traverse the membrane as a helical segment. The Extracellular segment spans residues 76 to 97 (LMMRAQLALPNNSFLDSNHYNE). A helical membrane pass occupies residues 98 to 117 (IFTTHGTIMIIFMAMPFLIG). A Fe(II)-heme a-binding site is contributed by H102. Over 118-139 (LINVVVPLQIGARDVAFPYLNN) the chain is Cytoplasmic. The helical transmembrane segment at 140–157 (LSFWTFFVGAMLFNISFV) threads the bilayer. The Extracellular segment spans residues 158–190 (IGGSPNAGWTSYMPLASNDMSPGPGENYYLLGL). The chain crosses the membrane as a helical span at residues 191–209 (QIAGIGTLMTGINFMVTIL). Over 210 to 227 (KMRTKGMTLMRMPMFTWT) the chain is Cytoplasmic. The helical transmembrane segment at 228–246 (TLITMVIIVFAFPVLTVAL) threads the bilayer. Over 247-272 (ALLSFDRLFGAHFFTLEAGGMPMLWA) the chain is Extracellular. A helical membrane pass occupies residues 273 to 292 (NLFWIWGHPEVYIVILPAFG). Cu cation-binding residues include H280 and Y284. The 1'-histidyl-3'-tyrosine (His-Tyr) cross-link spans 280-284 (HPEVY). The Cytoplasmic portion of the chain corresponds to 293 to 315 (IFSEIISSFARKQLFGYKAMVGS). A helical transmembrane segment spans residues 316 to 335 (IIAISVLSFLVWTHHFFTMG). Cu cation-binding residues include H329 and H330. Topologically, residues 336-343 (NSASVNSF) are extracellular. A helical membrane pass occupies residues 344–362 (FSITTMAISIPTGVKIFNW). Over 363–377 (LFTMYKGRISFTTPM) the chain is Cytoplasmic. A helical membrane pass occupies residues 378–397 (LWALAFIPNFVIGGVTGVML). At 398-405 (AMAAADYQ) the chain is on the extracellular side. A helical membrane pass occupies residues 406 to 425 (YHNTYFLVSHFHYVLIAGTV). Residue H415 participates in heme a3 binding. H417 is a binding site for Fe(II)-heme a. The Cytoplasmic segment spans residues 426–452 (FACFAGFIFWYPKMFGHKLNERIGKWF). Residues 453-472 (FWIFMIGFNICFFPQYFLGL) traverse the membrane as a helical segment. Over 473 to 490 (QGMPRRIYTYGPNDGWTT) the chain is Extracellular. A helical membrane pass occupies residues 491–510 (LNFISTVGAFMMGVGFLILC). Residues 511-584 (YNIYYSFRYS…SKFKKIHMPS (74 aa)) are Cytoplasmic-facing. The helical transmembrane segment at 585 to 604 (NSGRPFFMSVAFGLAGFGLV) threads the bilayer. Topologically, residues 605-610 (FEWYWM) are extracellular. The helical transmembrane segment at 611–631 (GVVGLIGVLLCMVLRSFEYDN) threads the bilayer. The Cytoplasmic segment spans residues 632–649 (GYYISVDEIKETERKISE).

This sequence belongs to the heme-copper respiratory oxidase family. The cofactor is Cu cation. It depends on ferriheme a as a cofactor. Heme A3. is required as a cofactor.

Its subcellular location is the cell membrane. The catalysed reaction is 2 a quinol + O2 = 2 a quinone + 2 H2O. It participates in energy metabolism; oxidative phosphorylation. In terms of biological role, catalyzes quinol oxidation with the concomitant reduction of oxygen to water. Major component for energy conversion during vegetative growth. This is Quinol oxidase subunit 1 (qoxB) from Bacillus subtilis (strain 168).